A 1118-amino-acid chain; its full sequence is Isoleucine--tRNA ligase (1118 aa).

Positions 64–74 match the 'HIGH' region motif; sequence PFANGLPHYGH. The 'KMSKS' region signature appears at 647-651; it reads KLSKR. Lys-650 contacts ATP.

It belongs to the class-I aminoacyl-tRNA synthetase family. IleS type 2 subfamily. Monomer. Requires Zn(2+) as cofactor.

Its subcellular location is the cytoplasm. It catalyses the reaction tRNA(Ile) + L-isoleucine + ATP = L-isoleucyl-tRNA(Ile) + AMP + diphosphate. Catalyzes the attachment of isoleucine to tRNA(Ile). As IleRS can inadvertently accommodate and process structurally similar amino acids such as valine, to avoid such errors it has two additional distinct tRNA(Ile)-dependent editing activities. One activity is designated as 'pretransfer' editing and involves the hydrolysis of activated Val-AMP. The other activity is designated 'posttransfer' editing and involves deacylation of mischarged Val-tRNA(Ile). The polypeptide is Isoleucine--tRNA ligase (Ehrlichia ruminantium (strain Gardel)).